Reading from the N-terminus, the 570-residue chain is Spastin (570 aa).

Topologically, residues 1–35 (MNSGHKARLRGGRACGPVSDGSARGNRLLFYTRSL) are cytoplasmic. An intramembrane region (helical) is located at residues 36 to 52 (SRVPEWLLRVLLLLLRW). Residues 53–570 (LFQPIRRAMA…NREYGDTTGV (518 aa)) lie on the Cytoplasmic side of the membrane. The MIT domain maps to 83 to 158 (YHKQAFEFIS…SMAEDRLKLL (76 aa)). The disordered stretch occupies residues 186-269 (APASGAVSKK…SPQRKRDMKN (84 aa)). 3 stretches are compositionally biased toward polar residues: residues 199–208 (LTITNQTSLR), 216–242 (TPNA…NQKG), and 251–261 (VKASTTATASP). 335–342 (GPPGNGKT) contributes to the ATP binding site.

Belongs to the AAA ATPase family. Spastin subfamily. Homohexamer. The homohexamer is stabilized by ATP-binding. The homohexamer may adopt a ring conformation through which microtubules pass prior to being severed. Interacts with microtubules.

Its subcellular location is the membrane. It is found in the cytoplasm. It localises to the cytoskeleton. The protein localises to the microtubule organizing center. The protein resides in the centrosome. Its subcellular location is the perinuclear region. It is found in the nucleus. It catalyses the reaction n ATP + n H2O + a microtubule = n ADP + n phosphate + (n+1) alpha/beta tubulin heterodimers.. Its function is as follows. ATP-dependent microtubule severing protein that specifically recognizes and cuts microtubules that are polyglutamylated. Preferentially recognizes and acts on microtubules decorated with short polyglutamate tails: severing activity increases as the number of glutamates per tubulin rises from one to eight, but decreases beyond this glutamylation threshold. Microtubule severing promotes reorganization of cellular microtubule arrays and the release of microtubules from the centrosome following nucleation. Required for membrane traffic from the endoplasmic reticulum (ER) to the Golgi and for completion of the abscission stage of cytokinesis. Also plays a role in axon growth and the formation of axonal branches. The sequence is that of Spastin from Danio rerio (Zebrafish).